A 236-amino-acid chain; its full sequence is Ribosome assembly factor MRT4 (236 aa).

The protein belongs to the universal ribosomal protein uL10 family. As to quaternary structure, associates with the pre-60S ribosomal particle.

It localises to the nucleus. The protein localises to the nucleolus. Its subcellular location is the cytoplasm. Component of the ribosome assembly machinery. Nuclear paralog of the ribosomal protein P0, it binds pre-60S subunits at an early stage of assembly in the nucleolus, and is replaced by P0 in cytoplasmic pre-60S subunits and mature 80S ribosomes. The chain is Ribosome assembly factor MRT4 from Saccharomyces cerevisiae (strain ATCC 204508 / S288c) (Baker's yeast).